A 271-amino-acid polypeptide reads, in one-letter code: Aquaporin-2 (271 aa).

Residues 1–11 (MWELRSIAFSR) lie on the Cytoplasmic side of the membrane. The helical transmembrane segment at 12–32 (AVFAEFLATLLFVFFGLGSAL) threads the bilayer. The Extracellular portion of the chain corresponds to 33–40 (NWPQALPS). Residues 41–59 (VLQIAMAFGLGIGTLVQAL) traverse the membrane as a helical segment. Residues 60–64 (GHISG) lie on the Cytoplasmic side of the membrane. The discontinuously helical intramembrane region spans 65–74 (AHINPAVTVA). The NPA 1 signature appears at 68 to 70 (NPA). Residues 75–85 (CLVGCHVSVLR) lie on the Cytoplasmic side of the membrane. The chain crosses the membrane as a helical span at residues 86–107 (AAFYVAAQLLGAVAGAALLHEI). Residues 108-127 (TPADIRGDLAVNALSNSTTA) are Extracellular-facing. Asparagine 123 is a glycosylation site (N-linked (GlcNAc...) asparagine). The helical transmembrane segment at 128-148 (GQAVTVELFLTLQLVLCIFAS) threads the bilayer. Over 149 to 156 (TDERRGEN) the chain is Cytoplasmic. A helical transmembrane segment spans residues 157–176 (PGTPALSIGFSVALGHLLGI). Residues 177-180 (HYTG) are Extracellular-facing. The segment at residues 181-193 (CSMNPARSLAPAV) is an intramembrane region (discontinuously helical). Positions 184–186 (NPA) match the NPA 2 motif. Topologically, residues 194-201 (VTGKFDDH) are extracellular. A helical transmembrane segment spans residues 202–222 (WVFWIGPLVGAILGSLLYNYV). Topologically, residues 223-271 (LFPPAKSLSERLAVLKGLEPDTDWEEREVRRRQSVELHSPQSLPRGTKA) are cytoplasmic. The disordered stretch occupies residues 248 to 271 (EREVRRRQSVELHSPQSLPRGTKA). Residue serine 256 is modified to Phosphoserine; by PKA. Residues 261–271 (SPQSLPRGTKA) are compositionally biased toward polar residues.

The protein belongs to the MIP/aquaporin (TC 1.A.8) family. In terms of assembly, homotetramer. Interacts with micropeptide MIAC; the interaction leads to a reduction of filamentous actin fibers and inhibition of the EREG/EGFR signaling pathway. Ser-256 phosphorylation is necessary and sufficient for expression at the apical membrane. Endocytosis is not phosphorylation-dependent. Post-translationally, N-glycosylated. Expressed in collecting tubules in kidney medulla (at protein level). Detected in kidney.

The protein resides in the apical cell membrane. Its subcellular location is the basolateral cell membrane. It is found in the cell membrane. The protein localises to the cytoplasmic vesicle membrane. It localises to the golgi apparatus. The protein resides in the trans-Golgi network membrane. It carries out the reaction H2O(in) = H2O(out). The enzyme catalyses glycerol(in) = glycerol(out). Forms a water-specific channel that provides the plasma membranes of renal collecting duct with high permeability to water, thereby permitting water to move in the direction of an osmotic gradient. Plays an essential role in renal water homeostasis. Could also be permeable to glycerol. The chain is Aquaporin-2 from Homo sapiens (Human).